The following is a 194-amino-acid chain: ATP-dependent Clp protease proteolytic subunit (194 aa).

Ser-97 serves as the catalytic Nucleophile. His-122 is a catalytic residue.

This sequence belongs to the peptidase S14 family. As to quaternary structure, fourteen ClpP subunits assemble into 2 heptameric rings which stack back to back to give a disk-like structure with a central cavity, resembling the structure of eukaryotic proteasomes.

It is found in the cytoplasm. The catalysed reaction is Hydrolysis of proteins to small peptides in the presence of ATP and magnesium. alpha-casein is the usual test substrate. In the absence of ATP, only oligopeptides shorter than five residues are hydrolyzed (such as succinyl-Leu-Tyr-|-NHMec, and Leu-Tyr-Leu-|-Tyr-Trp, in which cleavage of the -Tyr-|-Leu- and -Tyr-|-Trp bonds also occurs).. Cleaves peptides in various proteins in a process that requires ATP hydrolysis. Has a chymotrypsin-like activity. Plays a major role in the degradation of misfolded proteins. The sequence is that of ATP-dependent Clp protease proteolytic subunit from Campylobacter jejuni subsp. jejuni serotype O:23/36 (strain 81-176).